Consider the following 192-residue polypeptide: uncharacterized protein (192 aa).

Residues 29 to 160 (RRQAAVLIPL…PLDIQRRGHD (132 aa)) enclose the Nudix hydrolase domain. The short motif at 67–89 (GAVDSTDASLIAAALREAHEEVA) is the Nudix box element. 2 residues coordinate Mg(2+): Glu83 and Glu87.

The protein belongs to the Nudix hydrolase family. PCD1 subfamily. The cofactor is Mn(2+). It depends on Mg(2+) as a cofactor.

Probably mediates the hydrolysis of some nucleoside diphosphate derivatives. This is an uncharacterized protein from Enterobacter sp. (strain 638).